Reading from the N-terminus, the 568-residue chain is Proline--tRNA ligase (568 aa).

It belongs to the class-II aminoacyl-tRNA synthetase family. ProS type 1 subfamily. Homodimer.

The protein resides in the cytoplasm. The catalysed reaction is tRNA(Pro) + L-proline + ATP = L-prolyl-tRNA(Pro) + AMP + diphosphate. Catalyzes the attachment of proline to tRNA(Pro) in a two-step reaction: proline is first activated by ATP to form Pro-AMP and then transferred to the acceptor end of tRNA(Pro). As ProRS can inadvertently accommodate and process non-cognate amino acids such as alanine and cysteine, to avoid such errors it has two additional distinct editing activities against alanine. One activity is designated as 'pretransfer' editing and involves the tRNA(Pro)-independent hydrolysis of activated Ala-AMP. The other activity is designated 'posttransfer' editing and involves deacylation of mischarged Ala-tRNA(Pro). The misacylated Cys-tRNA(Pro) is not edited by ProRS. The protein is Proline--tRNA ligase of Alkalilimnicola ehrlichii (strain ATCC BAA-1101 / DSM 17681 / MLHE-1).